Consider the following 153-residue polypeptide: Phosphatase NudJ (153 aa).

Residues 3–131 (KPHVTVACVV…LVAESIRCYQ (129 aa)) enclose the Nudix hydrolase domain. Residues 36–57 (GHLEADETLVEAAARELWEETG) carry the Nudix box motif.

This sequence belongs to the Nudix hydrolase family. NudJ subfamily. Monomer. Requires Mg(2+) as cofactor.

In Escherichia coli O139:H28 (strain E24377A / ETEC), this protein is Phosphatase NudJ (nudJ).